The primary structure comprises 131 residues: Large ribosomal subunit protein bL17 (131 aa).

It belongs to the bacterial ribosomal protein bL17 family. Part of the 50S ribosomal subunit. Contacts protein L32.

The sequence is that of Large ribosomal subunit protein bL17 from Bordetella parapertussis (strain 12822 / ATCC BAA-587 / NCTC 13253).